A 264-amino-acid polypeptide reads, in one-letter code: NAD kinase (264 aa).

Aspartate 45 serves as the catalytic Proton acceptor. Residues 45-46 (DG), 121-122 (NE), arginine 147, aspartate 149, alanine 184, and glutamine 221 contribute to the NAD(+) site.

This sequence belongs to the NAD kinase family. The cofactor is a divalent metal cation.

It localises to the cytoplasm. It catalyses the reaction NAD(+) + ATP = ADP + NADP(+) + H(+). Its function is as follows. Involved in the regulation of the intracellular balance of NAD and NADP, and is a key enzyme in the biosynthesis of NADP. Catalyzes specifically the phosphorylation on 2'-hydroxyl of the adenosine moiety of NAD to yield NADP. The protein is NAD kinase of Leuconostoc mesenteroides subsp. mesenteroides (strain ATCC 8293 / DSM 20343 / BCRC 11652 / CCM 1803 / JCM 6124 / NCDO 523 / NBRC 100496 / NCIMB 8023 / NCTC 12954 / NRRL B-1118 / 37Y).